A 1082-amino-acid polypeptide reads, in one-letter code: TNF receptor-associated factor homolog 1b (1082 aa).

Residues 1–54 are disordered; the sequence is MAEAVDEDSGVGRSLEESSNGQHSQAGEALSEWRSSGQVENGTPSTSPSYWDID. The residue at position 2 (alanine 2) is an N-acetylalanine. Over residues 33–49 the composition is skewed to polar residues; it reads WRSSGQVENGTPSTSPS. Positions 67–198 constitute an MATH domain; sequence YGQYTWKIPK…SGCLTIEAKV (132 aa). Disordered stretches follow at residues 358–388, 440–666, 697–762, 780–800, 812–841, and 858–889; these read LPPK…ERDE, TEQR…SNVG, SIVN…QVVL, LSAP…APII, SSVQ…NQQT, and SSSS…PTSS. 2 stretches are compositionally biased toward basic and acidic residues: residues 359-388 and 440-453; these read PPKD…ERDE and TEQR…EREK. The stretch at 446–507 forms a coiled coil; it reads RGAAEREKKS…EEEKDSVTEK (62 aa). Over residues 454 to 471 the composition is skewed to basic residues; the sequence is KSKKKQAKQKRNKNKGKD. Residues 472 to 488 are compositionally biased toward basic and acidic residues; sequence KRKEEKVSFATHAKDLE. Composition is skewed to low complexity over residues 519–534 and 560–573; these read GDVS…SADI and SSEG…ISIS. Polar residues-rich tracts occupy residues 588–630 and 645–666; these read DDSS…QQVK and QPST…SNVG. Composition is skewed to low complexity over residues 858–871 and 878–889; these read SSSS…SSHG and PSSSYSQAPTSS.

As to quaternary structure, forms homooligomers. Interacts with SNC1, RPS2 and CPR1/CPR30. Interacts with ATG6.

It localises to the cytoplasm. The protein resides in the cell membrane. Functionally, functions redundantly with TRAF1A in the regulation of plant immune response. Contributes to the turnover of the nucleotide-binding domain and leucine-rich repeat-containing (NB-LRR) immune receptors SNC1 and RPS2. May associate with an E3 ubiquitin-protein ligase complex, which modulates ubiquitination and subsequent degradation of NB-LRR immune sensors to maintain their homeostasis. Functions redundantly with TRAF1A in the regulation of autophagosome formation. Required for SINAT1- and SINAT2-mediated ubiquitination and destabilization of ATG6. Functions as a molecular adapter that helps to regulate autophagy by modulating ATG6 stability. The polypeptide is TNF receptor-associated factor homolog 1b (Arabidopsis thaliana (Mouse-ear cress)).